Reading from the N-terminus, the 106-residue chain is Immunoglobulin lambda constant 2 (106 aa).

Residues 7–101 form the Ig-like domain; it reads PSVTLFPPSS…EGSTVEKTVA (95 aa). Cysteines 28 and 87 form a disulfide.

Immunoglobulins are composed of two identical heavy chains and two identical light chains; disulfide-linked.

Its subcellular location is the secreted. The protein resides in the cell membrane. Its function is as follows. Constant region of immunoglobulin light chains. Immunoglobulins, also known as antibodies, are membrane-bound or secreted glycoproteins produced by B lymphocytes. In the recognition phase of humoral immunity, the membrane-bound immunoglobulins serve as receptors which, upon binding of a specific antigen, trigger the clonal expansion and differentiation of B lymphocytes into immunoglobulins-secreting plasma cells. Secreted immunoglobulins mediate the effector phase of humoral immunity, which results in the elimination of bound antigens. The antigen binding site is formed by the variable domain of one heavy chain, together with that of its associated light chain. Thus, each immunoglobulin has two antigen binding sites with remarkable affinity for a particular antigen. The variable domains are assembled by a process called V-(D)-J rearrangement and can then be subjected to somatic hypermutations which, after exposure to antigen and selection, allow affinity maturation for a particular antigen. The chain is Immunoglobulin lambda constant 2 from Homo sapiens (Human).